Reading from the N-terminus, the 689-residue chain is MAEELVLETCDLQCERNGREHRTEEMGSQQLVVRRGQPFTITLNFAGRGYEEGVDKLAFDVETGPCPVETSGTRSHFTLTDCPEEGTWSAVLQQQDGATLCVSLCSPSIARVGRYRLTLEASTGYQGSSFHLGDFVLLFNAWHPEDAVYLKEEDERREYVLSQQGLIYMGSRDYITSTPWNFGQFEDEILAICLEMLDINPKFLRDQNLDCSRRNDPVYIGRVVSAMVNCNDEDHGVLLGRWDNHYEDGMSPMAWIGSVDILKRWRRLGCQPVKYGQCWVFAAVACTVMRCLGVPSRVVTNYNSAHDTNGNLVIDRYLSETGMEERRSTDMIWNFHCWVECWMTRPDLAPGYDGWQALDPTPQEKSEGVYCCGPAPVKAIKEGDLQVQYDIPFVFAEVNADVVYWIVQSDGEKKKSTHSSVVGKNISTKSVGRDSREDITHTYKYPEGSEKEREVFSKAEHEKSSLGEQEEGLHMRIKLSEGANNGSDFDVFAFISNDTDKERECRLRLCARTASYNGEVGPQCGFKDLLNLSLQPHMEQSVPLRILYEQYGPNLTQDNMIKVVALLTEYETGDSVVAIRDVYIQNPEIKIRILGEPMQERKLVAEIRLVNPLAEPLNNCIFVVEGAGLTEGQRIEELEDPVEPQAEAKFRMEFVPRQAGLHKLMVDFESDKLTGVKGYRNVIIAPLPK.

Residues cysteine 278, histidine 336, and aspartate 359 contribute to the active site. Ca(2+)-binding residues include asparagine 399, aspartate 401, glutamate 437, glutamate 447, and glutamate 452. Residues 427-453 (STKSVGRDSREDITHTYKYPEGSEKER) are disordered. Positions 431–441 (VGRDSREDITH) are enriched in basic and acidic residues. 476–483 (RIKLSEGA) serves as a coordination point for GTP. Glutamate 539 contacts Ca(2+). 580–583 (RDVY) contributes to the GTP binding site.

It belongs to the transglutaminase superfamily. Transglutaminase family. As to quaternary structure, monomer. Ca(2+) is required as a cofactor. Predominates in mature erythrocytes. Also found in kidney and cardiac muscle.

The protein resides in the cytoplasm. It localises to the cytosol. The protein localises to the nucleus. Its subcellular location is the chromosome. It is found in the secreted. The protein resides in the extracellular space. It localises to the extracellular matrix. The protein localises to the cell membrane. Its subcellular location is the mitochondrion. It catalyses the reaction L-glutaminyl-[protein] + L-lysyl-[protein] = [protein]-L-lysyl-N(6)-5-L-glutamyl-[protein] + NH4(+). It carries out the reaction L-glutaminyl-[protein] + serotonin = 5-serotonyl-L-glutamyl-[protein] + NH4(+). The enzyme catalyses L-glutaminyl-[protein] + dopamine = 5-dopaminyl-L-glutamyl-[protein] + NH4(+). The catalysed reaction is L-glutaminyl-[protein] + histamine = 5-histaminyl-L-glutamyl-[protein] + NH4(+). It catalyses the reaction L-glutaminyl-[protein] + (R)-noradrenaline = 5-(R)-noradrenalinyl-L-glutamyl-[protein] + NH4(+). It carries out the reaction L-glutaminyl-[protein] + H2O = L-glutamyl-[protein] + NH4(+). Acyltransferase activity is regulated by the binding of GTP and Ca(2+): inactivated by GTP, which stabilizes its closed structure, thereby obstructing the accessibility of substrates to the active sites. In contrast, Ca(2+) acts as a cofactor by inducing conformational change to the active open form. In absence of Ca(2+), Mg(2+) may bind Ca(2+)-binding sites, promoting GTP-binding and subsequent inhibition of the acyltransferase activity. Its function is as follows. Calcium-dependent acyltransferase that catalyzes the formation of covalent bonds between peptide-bound glutamine and various primary amines, such as gamma-amino group of peptide-bound lysine, or mono- and polyamines, thereby producing cross-linked or aminated proteins, respectively. Involved in many biological processes, such as bone development, angiogenesis, wound healing, cellular differentiation, chromatin modification and apoptosis. Acts as a protein-glutamine gamma-glutamyltransferase by mediating the cross-linking of proteins: under physiological conditions, the protein cross-linking activity is inhibited by GTP; inhibition is relieved by Ca(2+) in response to various stresses. When secreted, catalyzes cross-linking of proteins of the extracellular matrix, resulting in the formation of scaffolds. Plays a key role during apoptosis, both by (1) promoting the cross-linking of cytoskeletal proteins resulting in condensation of the cytoplasm, and by (2) mediating cross-linking proteins of the extracellular matrix, resulting in the irreversible formation of scaffolds that stabilize the integrity of the dying cells before their clearance by phagocytosis, thereby preventing the leakage of harmful intracellular components. In addition to protein cross-linking, can use different monoamine substrates to catalyze a vast array of protein post-translational modifications: mediates aminylation of serotonin, dopamine, noradrenaline or histamine into glutamine residues of target proteins to generate protein serotonylation, dopaminylation, noradrenalinylation or histaminylation, respectively. Mediates protein serotonylation of small GTPases during activation and aggregation of platelets, leading to constitutive activation of these GTPases. Plays a key role in chromatin organization by mediating serotonylation and dopaminylation of histone H3. Catalyzes serotonylation of 'Gln-5' of histone H3 (H3Q5ser) during serotonergic neuron differentiation, thereby facilitating transcription. Acts as a mediator of neurotransmission-independent role of nuclear dopamine in ventral tegmental area (VTA) neurons: catalyzes dopaminylation of 'Gln-5' of histone H3 (H3Q5dop), thereby regulating relapse-related transcriptional plasticity in the reward system. Also acts as a protein deamidase by mediating the side chain deamidation of specific glutamine residues of proteins to glutamate. May also act as an isopeptidase cleaving the previously formed cross-links. Also able to participate in signaling pathways independently of its acyltransferase activity: acts as a signal transducer in alpha-1 adrenergic receptor-mediated stimulation of phospholipase C-delta (PLCD) activity and is required for coupling alpha-1 adrenergic agonists to the stimulation of phosphoinositide lipid metabolism. The chain is Protein-glutamine gamma-glutamyltransferase 2 from Gallus gallus (Chicken).